Here is a 132-residue protein sequence, read N- to C-terminus: Cytochrome b5 (132 aa).

Positions 2–78 (GKIFTLAEVA…LDEYYVGDID (77 aa)) constitute a Cytochrome b5 heme-binding domain. Heme is bound by residues His37 and His61. Residues 104–124 (FVIKLLQFLVPLVILAGAIGI) form a helical membrane-spanning segment.

It belongs to the cytochrome b5 family.

The protein localises to the endoplasmic reticulum membrane. The protein resides in the microsome membrane. In terms of biological role, membrane bound hemoprotein which function as an electron carrier for several membrane bound oxygenases. The polypeptide is Cytochrome b5 (Borago officinalis (Bourrache)).